The sequence spans 256 residues: UPF0246 protein Bpet1601 (256 aa).

Belongs to the UPF0246 family.

This Bordetella petrii (strain ATCC BAA-461 / DSM 12804 / CCUG 43448) protein is UPF0246 protein Bpet1601.